The chain runs to 664 residues: Chaperone protein DnaK (664 aa).

Threonine 201 bears the Phosphothreonine; by autocatalysis mark. Over residues 574 to 592 the composition is skewed to basic and acidic residues; the sequence is LKEDASTEKIKEASEELSR. The tract at residues 574–664 is disordered; the sequence is LKEDASTEKI…DVEIVDKPND (91 aa). Over residues 600 to 617 the composition is skewed to low complexity; the sequence is AMQSQSASAAPSSAANAQ. Over residues 639–649 the composition is skewed to polar residues; sequence GNSTSASSNNE.

The protein belongs to the heat shock protein 70 family.

Acts as a chaperone. This chain is Chaperone protein DnaK, found in Chlamydia felis (strain Fe/C-56) (Chlamydophila felis).